Here is a 484-residue protein sequence, read N- to C-terminus: Cysteine--tRNA ligase (484 aa).

Cys29 contacts Zn(2+). The 'HIGH' region motif lies at 31–41; that stretch reads PTVQSAPHIGH. Zn(2+)-binding residues include Cys219, His244, and Glu248. A 'KMSKS' region motif is present at residues 275–279; it reads KMSKS. Position 278 (Lys278) interacts with ATP.

Belongs to the class-I aminoacyl-tRNA synthetase family. As to quaternary structure, monomer. Zn(2+) serves as cofactor.

It is found in the cytoplasm. It carries out the reaction tRNA(Cys) + L-cysteine + ATP = L-cysteinyl-tRNA(Cys) + AMP + diphosphate. This chain is Cysteine--tRNA ligase, found in Clavibacter michiganensis subsp. michiganensis (strain NCPPB 382).